Here is a 163-residue protein sequence, read N- to C-terminus: Large ribosomal subunit protein uL15 (163 aa).

This sequence belongs to the universal ribosomal protein uL15 family. As to quaternary structure, part of the 50S ribosomal subunit.

Functionally, binds to the 23S rRNA. This chain is Large ribosomal subunit protein uL15, found in Orientia tsutsugamushi (strain Ikeda) (Rickettsia tsutsugamushi).